We begin with the raw amino-acid sequence, 271 residues long: tRNA (guanine-N(7)-)-methyltransferase (271 aa).

The disordered stretch occupies residues 1 to 52 (MSDSHHTPEAASASLRHVRAKGEPRFPDGPKADPAGSHFERRIRSFQPRRSR). Residues 20–31 (AKGEPRFPDGPK) are compositionally biased toward basic and acidic residues. The S-adenosyl-L-methionine site is built by Glu-93, Asp-118, Asp-145, and Asp-168. Asp-168 is a catalytic residue. Substrate is bound by residues Lys-172, Asp-204, and 241–244 (TRFE).

It belongs to the class I-like SAM-binding methyltransferase superfamily. TrmB family.

The catalysed reaction is guanosine(46) in tRNA + S-adenosyl-L-methionine = N(7)-methylguanosine(46) in tRNA + S-adenosyl-L-homocysteine. It participates in tRNA modification; N(7)-methylguanine-tRNA biosynthesis. Functionally, catalyzes the formation of N(7)-methylguanine at position 46 (m7G46) in tRNA. This Streptomyces coelicolor (strain ATCC BAA-471 / A3(2) / M145) protein is tRNA (guanine-N(7)-)-methyltransferase.